The following is a 377-amino-acid chain: Flagellar P-ring protein (377 aa).

Positions 1–33 (MRYPVSTGIAAPAWFAFFCAWAGLWTFSLPVQA) are cleaved as a signal peptide.

Belongs to the FlgI family. As to quaternary structure, the basal body constitutes a major portion of the flagellar organelle and consists of four rings (L,P,S, and M) mounted on a central rod.

The protein resides in the periplasm. The protein localises to the bacterial flagellum basal body. Assembles around the rod to form the L-ring and probably protects the motor/basal body from shearing forces during rotation. In Nitrosospira multiformis (strain ATCC 25196 / NCIMB 11849 / C 71), this protein is Flagellar P-ring protein.